The chain runs to 307 residues: Leucine-rich repeat-containing protein 59 (307 aa).

At M1 the chain carries N-acetylmethionine. N-acetylthreonine; in Leucine-rich repeat-containing protein 59, N-terminally processed is present on T2. At 2 to 244 the chain is on the cytoplasmic side; sequence TKAGSKGGNL…KPPPRKHTRS (243 aa). LRR repeat units follow at residues 10-31, 40-62, 63-84, 86-107, and 109-128; these read NLRD…NEVP, KATV…CGLT, HLVK…FGRL, NLQH…FAQL, and NLKW…AKVA. 2 positions are modified to phosphoserine: S23 and S25. K73 is modified (N6-succinyllysine). N6-acetyllysine is present on K135. A coiled-coil region spans residues 148–216; that stretch reads MKAVQADQER…KASKREQEKK (69 aa). The segment at 150-241 is disordered; the sequence is AVQADQERER…RPRKPPPRKH (92 aa). The segment covering 154–221 has biased composition (basic and acidic residues); the sequence is DQERERQRRL…EQEKKPKKEA (68 aa). The segment covering 229–241 has biased composition (basic residues); that stretch reads SGSRPRKPPPRKH. Residues 245 to 265 form a helical membrane-spanning segment; sequence WAVLKVLLLLLLLCVAGGLVV. Residues 266 to 307 lie on the Lumenal side of the membrane; that stretch reads CRVTGLHQQPLCTSVNTIYDNAVQGLRHHEILQWVLQTDSQQ.

As to quaternary structure, can form homodimers. Interacts with SGO1. Interacts with FGF1.

The protein resides in the microsome membrane. Its subcellular location is the endoplasmic reticulum membrane. It localises to the nucleus envelope. In terms of biological role, required for nuclear import of FGF1, but not that of FGF2. Might regulate nuclear import of exogenous FGF1 by facilitating interaction with the nuclear import machinery and by transporting cytosolic FGF1 to, and possibly through, the nuclear pores. This is Leucine-rich repeat-containing protein 59 (Lrrc59) from Mus musculus (Mouse).